Here is a 545-residue protein sequence, read N- to C-terminus: Glucose-6-phosphate isomerase (545 aa).

Catalysis depends on E351, which acts as the Proton donor. Active-site residues include H382 and K510.

This sequence belongs to the GPI family.

It localises to the cytoplasm. The enzyme catalyses alpha-D-glucose 6-phosphate = beta-D-fructose 6-phosphate. It participates in carbohydrate biosynthesis; gluconeogenesis. Its pathway is carbohydrate degradation; glycolysis; D-glyceraldehyde 3-phosphate and glycerone phosphate from D-glucose: step 2/4. In terms of biological role, catalyzes the reversible isomerization of glucose-6-phosphate to fructose-6-phosphate. The polypeptide is Glucose-6-phosphate isomerase (Shewanella baltica (strain OS195)).